A 204-amino-acid chain; its full sequence is Nucleoside triphosphate pyrophosphatase (204 aa).

The Proton acceptor role is filled by D79.

It belongs to the Maf family. Requires a divalent metal cation as cofactor.

The protein localises to the cytoplasm. It carries out the reaction a ribonucleoside 5'-triphosphate + H2O = a ribonucleoside 5'-phosphate + diphosphate + H(+). It catalyses the reaction a 2'-deoxyribonucleoside 5'-triphosphate + H2O = a 2'-deoxyribonucleoside 5'-phosphate + diphosphate + H(+). Its function is as follows. Nucleoside triphosphate pyrophosphatase. May have a dual role in cell division arrest and in preventing the incorporation of modified nucleotides into cellular nucleic acids. The sequence is that of Nucleoside triphosphate pyrophosphatase from Trichodesmium erythraeum (strain IMS101).